An 81-amino-acid polypeptide reads, in one-letter code: MQQEERGSRKVKKGIVVSNKMQKTVVVKVERTFAHPQYGKIVTRGKKYYAHNESGDLQIGDEVKIMETRPLSKLKRWRVVA.

This sequence belongs to the universal ribosomal protein uS17 family. In terms of assembly, part of the 30S ribosomal subunit.

In terms of biological role, one of the primary rRNA binding proteins, it binds specifically to the 5'-end of 16S ribosomal RNA. This Protochlamydia amoebophila (strain UWE25) protein is Small ribosomal subunit protein uS17.